Consider the following 327-residue polypeptide: E3 ubiquitin ligase Rnf121 (327 aa).

An N-acetylalanine modification is found at Ala2. 5 consecutive transmembrane segments (helical) span residues 50-70 (MHAE…LLLV), 79-99 (SYNM…TVKL), 100-120 (HWWR…FVTF), 148-168 (ATGI…NLLF), and 172-192 (PEDA…YGVL). An RING-type; atypical zinc finger spans residues 226–276 (CAVCGQQIFVDVNEEGIIENTYRLSCNHVFHEFCIRGWCIVGKKQTCPYCK). Residues 306–326 (LVAWQPVIIGLVQGISYILGL) traverse the membrane as a helical segment.

It belongs to the RNF121 family.

It localises to the endoplasmic reticulum membrane. It catalyses the reaction S-ubiquitinyl-[E2 ubiquitin-conjugating enzyme]-L-cysteine + [acceptor protein]-L-lysine = [E2 ubiquitin-conjugating enzyme]-L-cysteine + N(6)-ubiquitinyl-[acceptor protein]-L-lysine.. Its pathway is protein modification; protein ubiquitination. Its function is as follows. E3 ubiquitin ligase which accepts ubiquitin and transfers it to substrates thereby promoting their degradation by the endoplasmic reticulum-associated degradation (ERAD) pathway which is a pathway involved in ubiquitin-dependent degradation of misfolded endoplasmic reticulum proteins. May regulate the unfolded protein response to reduce endoplasmic reticulum stress. This is E3 ubiquitin ligase Rnf121 (Rnf121) from Mus musculus (Mouse).